We begin with the raw amino-acid sequence, 491 residues long: Glucose-6-phosphate 1-dehydrogenase (491 aa).

NADP(+)-binding positions include Arg49, 91–92, and Lys146; that span reads DV. Residues His176, Lys180, Glu214, and Asp233 each coordinate substrate. The active-site Proton acceptor is His238. Substrate-binding residues include Lys338 and Lys343.

It belongs to the glucose-6-phosphate dehydrogenase family.

The enzyme catalyses D-glucose 6-phosphate + NADP(+) = 6-phospho-D-glucono-1,5-lactone + NADPH + H(+). It functions in the pathway carbohydrate degradation; pentose phosphate pathway; D-ribulose 5-phosphate from D-glucose 6-phosphate (oxidative stage): step 1/3. Functionally, catalyzes the oxidation of glucose 6-phosphate to 6-phosphogluconolactone. The sequence is that of Glucose-6-phosphate 1-dehydrogenase from Buchnera aphidicola subsp. Acyrthosiphon pisum (strain APS) (Acyrthosiphon pisum symbiotic bacterium).